The following is a 2333-amino-acid chain: MNTTDCFIALVHAIREIRAFFLPRATGRMEFTLHNGERKVFYSRPNNHDNCWLNTILQLFRYVGEPFFDWVYDSPENLTLEAIEQLEELTGLELHEGGPPALVIWNIKHLLHTGIGTASRPSEVCMVDGTNMCLADFHAGIFLKGQEHAVFACVTSNGWYAIDDEDFYPWTPDPSDVLVFVPYDQEPLNGEWKTKVQQKLKGAGQSSPATGSQNQSGNTGSIINNYYMQQYQNSMDTQLGDNAISGGSNEGSTDTTSTHTTNTQNNDWFSKLASSAFTGLFGALLADKKTEETTLLEDRILTTRNGHTTSTTQSSVGVTHGYSTEEDHVAGPNTSGLETRVVQAERFYKKYLFDWTTDKAFGHLEKLELPSDHHGVFGHLVDSYAYMRNGWDVEVSAVGNQFNGGCLLVAMVPEWKEFDTREKYQLTLFPHQFISPRTNMTAHITVPYLGVNRYDQYKKHKPWTLVVMVVSPLTVNNTSAAQIKVYANIAPTYVHVAGELPSKEGIFPVACADGYGGLVTTDPKTADPAYGKVYNPPRTNYPGRFTNLLDVAEACPTFLCFDDGKPYVTTRTDDTRLLAKFDLSLAAKHMSNTYLSGIAQYYTQYSGTINLHFMFTGSTDSKARYMVAYIPPGVETPPDTPERAAHCIHAEWDTGLNSKFTFSIPYVSAADYAYTASDTAETINVQGWVCIYQITHGKAENDTLVVSVSAGKDFELRLPIDPRQQTTATGESADPVTTTVENYGGETQIQRRHHTDIGFIMDRFVKIQSLSPTHVIDLMQTHQHGLVGALLRAATYYFSDLEIVVRHEGNLTWVPNGAPESALLNTSNPTAYNKAPFTRLALPYTAPHRVLATVYNGTSKYAVGGSGRRGDMGSLAARVVKQLPASFNYGAIKADAIHELLVRMKRAELYCPRPLLAIEVSSQDRHKQKIIAPAKQLLNFDLLKLAGDVESNPGPFFFSDVRSNFSKLVDTINQMQEDMSTKHGPDFNRLVSAFEELATGVKAIRTGLDEAKPWYKLIKLLSRLSCMAAVAARSKDPVLVAIMLADTGLEILDSTFVVKKISDSLSSLFHVPAPVFSFGAPILLAGLVKVASSFFRSTPEDLERAEKQLKARDINDIFAILKNGEWLVKLILAIRDWIKAWIASEEKFVTTTDLVPGILEKQRDLNDPSKYKEAKEWLDNARQACLKSGNVHIANLCKVVAPAPSRSRPEPVVVCLRGKSGQGKSFLANVLAQAISTHFTGRTDSVWYCPPDPDHFDGYNQQTVVVMDDLGQNPDGKDFKYFAQMVSTTGFIPPMASLEDKGKPFNSKVIIATTNLYSGFTPRTMVCPDALNRRFHFDIDVSAKDGYKINNKLDIIKALEDTHTNPVAMFQYDCALLNGMAVEMKRMQQDMFKPQPPLQNVYQLVQEVIERVELHEKVSSHPIFKQISIPSQKSVLYFLIEKGQHEAAIEFFEGMVHDSIKEELRPLIQQTSFVKRAFKRLKENFEIVALCLTLLANIVIMIRETRKRQKMVDDAVSEYIERANITTDDKTLDEAEKNPLETSGASTVGFRERPLPGQKARNDENSEPAQPAEEQPQAEGPYAGPLERQKPLKVRAKLPQQEGPYAGPMERQKPLKVKAKAPVVKEGPYEGPVKKPVALKVKAKNLIVTESGAPPTDLQKLVMGNTKPVELILDGKTVAICCATGVFGTAYLVPRHLFAEKYDKIMLDGRAMTDSDYRVFEFEIKVKGQDMLSDAALMVLHRGNRVRDITKHFRDTARMKKGTPVVGVINNADVGRLIFSGEALTYKDIVVCMDGDTMPGLFAYKAATKAGYCGGAVLAKDGADTFIVGTHSAGGNGVGYCSCVSRSMLLKMKAHVDPEPHHEGLIVDTRDVEERVHVMRKTKLAPTVAHGVFNPEFGPAALSNKDPRLNDGVVLDEVIFSKHKGDTKMSEEDKALFRRCAADYASRLHSVLGTANAPLSIYEAIKGVDGLDAMEPDTAPGLPWALQGKRRGALIDFENGTVGPEVEAALKLMEKREYKFACQTFLKDEIRPMEKVRAGKTRIVDVLPVEHILYTRMMIGRFCAQMHSNNGPQIGSAVGCNPDVDWQRFGTHFAQYRNVWDVDYSAFDANHCSDAMNIMFEEVFRTEFGFHPNAEWILKTLVNTEHAYENKRITVEGGMPSGCSATSIINTILNNIYVLYALRRHYEGVELDTYTMISYGDDIVVASDYDLDFEALKPHFKSLGQTITPADKSDKGFVLGHSITDVTFLKRHFHMDYGTGFYKPVMASKTLEAILSFARRGTIQEKLISVAGLAVHSGPDEYRRLFEPFQGLFEIPSYRSLYLRWVNAVCGDA.

The region spanning 1–201 (MNTTDCFIAL…WKTKVQQKLK (201 aa)) is the Peptidase C28 domain. Residues 1–1481 (MNTTDCFIAL…SFVKRAFKRL (1481 aa)) lie on the Cytoplasmic side of the membrane. Catalysis depends on for leader protease activity residues Cys-51, His-148, and Asp-163. Disordered stretches follow at residues 197 to 218 (QQKLKGAGQSSPATGSQNQSGN) and 238 to 265 (QLGDNAISGGSNEGSTDTTSTHTTNTQN). Gly-202 carries the N-myristoyl glycine; by host lipid modification. Polar residues-rich tracts occupy residues 204-218 (GQSSPATGSQNQSGN) and 238-251 (QLGDNAISGGSNEG). Low complexity predominate over residues 252–265 (STDTTSTHTTNTQN). The interval 789 to 797 (ALLRAATYY) is antigenic epitope. A Cell attachment site motif is present at residues 869-871 (RGD). One can recognise an SF3 helicase domain in the interval 1190 to 1354 (NVHIANLCKV…DGYKINNKLD (165 aa)). Position 1218–1225 (1218–1225 (GKSGQGKS)) interacts with ATP. The stretch at 1482 to 1502 (KENFEIVALCLTLLANIVIMI) is an intramembrane region. Residues 1503–2333 (RETRKRQKMV…RWVNAVCGDA (831 aa)) lie on the Cytoplasmic side of the membrane. Composition is skewed to basic and acidic residues over residues 1530-1539 (KTLDEAEKNP) and 1550-1564 (FRERPLPGQKARNDE). Residues 1530-1585 (KTLDEAEKNPLETSGASTVGFRERPLPGQKARNDENSEPAQPAEEQPQAEGPYAGP) are disordered. Residues 1567-1579 (EPAQPAEEQPQAE) show a composition bias toward low complexity. O-(5'-phospho-RNA)-tyrosine is present on residues Tyr-1582, Tyr-1605, and Tyr-1629. One can recognise a Peptidase C3 domain in the interval 1653–1849 (APPTDLQKLV…YCSCVSRSML (197 aa)). Catalysis depends on His-1696, which acts as the For protease 3C activity; Proton donor/acceptor. Residues Asp-1734 and Cys-1813 each act as for protease 3C activity in the active site. The short motif at 1879 to 1887 (MRKTKLAPT) is the Nuclear localization signal element. Residues 2097 to 2215 (RNVWDVDYSA…ASDYDLDFEA (119 aa)) form the RdRp catalytic domain. The active-site For RdRp activity is the Asp-2201.

This sequence belongs to the picornaviruses polyprotein family. As to quaternary structure, interacts with host ISG15. Interacts (via R-G-D motif) with host ITGAV/ITGB6. Interacts with host MAVS; this interaction inhibits binding of host TRAF3 to MAVS, thereby suppressing interferon-mediated responses. In terms of assembly, forms homooligomers. As to quaternary structure, homohexamer. Interacts with host VIM. Interacts with host BECN1. Interacts with host DCTN3. In terms of assembly, interacts with RNA-dependent RNA polymerase; this interaction allows 3B-1 to binds 2 polymerases and act as a primer. It also allows the recruitment of the RNA-dependent RNA polymerase to host membranes. As to quaternary structure, interacts with RNA-dependent RNA polymerase; this interaction allows 3B-2 to act as a primer. Interacts with RNA-dependent RNA polymerase; this interaction allows 3B-3 to act as a primer. In terms of assembly, interacts with 3B-1; this interaction allows 3B-1 to binds 2 polymerases and act as a primer. It also allows the recruitment of the RNA-dependent RNA polymerase to host membranes. Interacts with 3B-2; this interaction allows 3B-2 to act as a primer. Interacts with 3B-3; this interaction allows 3B-3 to act as a primer. In terms of processing, removes six residues from its own C-terminus, generating sLb(pro). Specific enzymatic cleavages in vivo by the viral proteases yield a variety of precursors and mature proteins. The polyprotein seems to be cotranslationally cleaved at the 2A/2B junction by a ribosomal skip from one codon to the next without formation of a peptide bond. This process would release the L-P1-2A peptide from the translational complex. Post-translationally, during virion maturation, immature virions are rendered infectious following cleavage of VP0 into VP4 and VP2. This maturation seems to be an autocatalytic event triggered by the presence of RNA in the capsid and is followed by a conformational change of the particle. In terms of processing, myristoylation is required during RNA encapsidation and formation of the mature virus particle. Uridylylated by the polymerase and covalently linked to the 5'-end of genomic RNA. These uridylylated forms act as a nucleotide-peptide primer for the polymerase.

Its subcellular location is the host nucleus. It is found in the host cytoplasm. The protein resides in the virion. The protein localises to the host endoplasmic reticulum membrane. It localises to the host cytoplasmic vesicle membrane. It carries out the reaction Autocatalytically cleaves itself from the polyprotein of the foot-and-mouth disease virus by hydrolysis of a Lys-|-Gly bond, but then cleaves host cell initiation factor eIF-4G at bonds -Gly-|-Arg- and -Lys-|-Arg-.. It catalyses the reaction a ribonucleoside 5'-triphosphate + H2O = a ribonucleoside 5'-diphosphate + phosphate + H(+). The catalysed reaction is RNA(n) + a ribonucleoside 5'-triphosphate = RNA(n+1) + diphosphate. The enzyme catalyses Selective cleavage of Gln-|-Gly bond in the poliovirus polyprotein. In other picornavirus reactions Glu may be substituted for Gln, and Ser or Thr for Gly.. Its function is as follows. Autocatalytically cleaves itself from the polyprotein at the L/VP0 junction. Also cleaves the host translation initiation factors EIF4G1 and EIF4G3, in order to shut off the capped cellular mRNA transcription. Plays a role in counteracting host innate antiviral response using diverse mechanisms. Possesses a deubiquitinase activity acting on both 'Lys-48' and 'Lys-63'-linked polyubiquitin chains. In turn, inhibits the ubiquitination and subsequent activation of key signaling molecules of type I IFN response such as host RIGI, TBK1, TRAF3 and TRAF6. Inhibits host NF-kappa-B activity by inducing a decrease in RELA mRNA levels. Cleaves a peptide bond in the C-terminus of host ISG15, resulting in the damaging of this modifier that can no longer be attached to target proteins. Also cleaves host G3BP1 and G3BP2 in order to inhibit cytoplasmic stress granules assembly. Functionally, lies on the inner surface of the capsid shell. After binding to the host receptor, the capsid undergoes conformational changes. Capsid protein VP4 is released, capsid protein VP1 N-terminus is externalized, and together, they shape a pore in the host membrane through which the viral genome is translocated into the host cell cytoplasm. After genome has been released, the channel shrinks. Forms an icosahedral capsid of pseudo T=3 symmetry with capsid proteins VP1 and VP3. The capsid is composed of 60 copies of each capsid protein organized in the form of twelve pentamers and encloses the viral positive strand RNA genome. Upon acidifcation in the endosome, dissociates into pentamers. In terms of biological role, forms an icosahedral capsid of pseudo T=3 symmetry with capsid proteins VP0 and VP3. The capsid is composed of 60 copies of each capsid protein organized in the form of twelve pentamers and encloses the viral positive strand RNA genome. Upon acidifcation in the endosome, dissociates into pentamers. Its function is as follows. Forms an icosahedral capsid of pseudo T=3 symmetry with capsid proteins VP2 and VP3. The capsid is composed of 60 copies of each capsid protein organized in the form of twelve pentamers and encloses the viral positive strand RNA genome. Mediates cell entry by attachment to an integrin receptor, usually host ITGAV/ITGB6. In addition, targets host MAVS to suppress type I IFN pathway. Upon acidifcation in the endosome, dissociates into pentamers. Functionally, mediates self-processing of the polyprotein by a translational effect termed 'ribosome skipping'. Mechanistically, 2A-mediated cleavage occurs between the C-terminal glycine and the proline of the downstream protein 2B. In the case of foot-and-mouth disease virus, the 2A oligopeptide is post-translationally 'trimmed' from the C-terminus of the upstream protein 1D by 3C proteinase. Plays an essential role in the virus replication cycle by acting as a viroporin. Creates a pore in the host endoplasmic reticulum and as a consequence releases Ca2+ in the cytoplasm of infected cell. In turn, high levels of cytoplasmic calcium may trigger membrane trafficking and transport of viral ER-associated proteins to viroplasms, sites of viral genome replication. In terms of biological role, associates with and induces structural rearrangements of intracellular membranes. Triggers host autophagy by interacting with host BECN1 and thereby promotes viral replication. Participates in viral replication and interacts with host DHX9. Displays RNA-binding, nucleotide binding and NTPase activities. May play a role in virion morphogenesis and viral RNA encapsidation by interacting with the capsid protein VP3. Its function is as follows. Plays important roles in virus replication, virulence and host range. Cooperates with host DDX56 to inhibit IRF3 nuclear translocation and subsequent type I interferon production. Functionally, covalently linked to the 5'-end of both the positive-strand and negative-strand genomic RNAs. Acts as a genome-linked replication primer. Cysteine protease that generates mature viral proteins from the precursor polyprotein. In addition to its proteolytic activity, binds to viral RNA and thus influences viral genome replication. RNA and substrate bind cooperatively to the protease. In terms of biological role, RNA-directed RNA polymerase 3D-POL replicates genomic and antigenomic RNA by recognizing replications specific signals. Covalently attaches UMP to a tyrosine of VPg, which is used to prime RNA synthesis. The positive stranded RNA genome is first replicated at virus induced membranous vesicles, creating a dsRNA genomic replication form. This dsRNA is then used as template to synthesize positive stranded RNA genomes. ss(+)RNA genomes are either translated, replicated or encapsidated. The protein is Genome polyprotein of Bos taurus (Bovine).